Here is a 280-residue protein sequence, read N- to C-terminus: Sulfur carrier protein FdhD (280 aa).

Cys121 functions as the Cysteine persulfide intermediate in the catalytic mechanism. Residue 258-263 (FSRPGR) coordinates Mo-bis(molybdopterin guanine dinucleotide).

This sequence belongs to the FdhD family.

The protein resides in the cytoplasm. Its function is as follows. Required for formate dehydrogenase (FDH) activity. Acts as a sulfur carrier protein that transfers sulfur from IscS to the molybdenum cofactor prior to its insertion into FDH. The chain is Sulfur carrier protein FdhD from Cronobacter sakazakii (strain ATCC BAA-894) (Enterobacter sakazakii).